Consider the following 532-residue polypeptide: MLDNLKKDIETKLFNAEVFEGAVLPPVDLTPAPPHTGADISLTWAMSAAKTLKKNPLEIAKAAVKVISEVTFVASASYAAPGFINIILEDSFISSSALDRRLKNRKTAGENKERVLIEFVSANPTGPLHVASGRGASLGDSLVRIFNALGIQCDSEYYVNDSGNQAMLLGVSLKARVNGQEPPENGYHGSYLIEMADEIREMSKDWTEEQFSIYAIEYLIKTHQRDMQAFNVNFTRWFRESELYKESLPAKALDFLKEKGLAYEADGAVWFGTTKDNDDKDRVLVRADGRPTYFLADIAYHKNKYDRGFTTLVDILGADHHGYVPRMKAAVKALGENEESFVPIIHQLVHLIEGGEKVKMSKRSGRFITLKELTEEVGADACRFLFASRTPDAHMNFDIDLAKKRTNENPVFYVQYVHARAASIARMAEQKHLQQAENLVDFKLTPQERTLLIKILWFKHALKNCVRDMSPHHLTTYLIELAGNFHSFYDACRVVDEDNPQTTAHRLLICDRVRERIKKGLEFLGVSAPEEM.

A 'HIGH' region motif is present at residues 122-132; the sequence is ANPTGPLHVAS.

Belongs to the class-I aminoacyl-tRNA synthetase family. In terms of assembly, monomer.

The protein resides in the cytoplasm. It catalyses the reaction tRNA(Arg) + L-arginine + ATP = L-arginyl-tRNA(Arg) + AMP + diphosphate. The chain is Arginine--tRNA ligase from Elusimicrobium minutum (strain Pei191).